The sequence spans 269 residues: MNTIESITADLHGLGVRPGDLIMVHASLKAVGPVEGGAASVVSALRAAVGSAGTLMGYASWDRSPYEETLNGARMDEELRRRWPPFDLATSGTYPGFGLLNRFLLEAPDARRSAHPDASMVAVGPLAATLTEPHRLGQALGEGSPLERFVGHGGKVLLLGAPLDSVTVLHYAEAIAPIPNKRRVTYEMPMLGPDGRVRWELAEDFDSNGILDCFAVDGKPDAVETIAKAYVELGRHREGIVGRAPSYLFEAQDIVSFGVTYLEQHFGAP.

It belongs to the antibiotic N-acetyltransferase family.

It carries out the reaction a 2-deoxystreptamine antibiotic + acetyl-CoA = an N(3)-acetyl-2-deoxystreptamine antibiotic + CoA + H(+). Functionally, resistance to antibiotics containing the 2-deoxy-streptamine ring including gentamicin, kanamycin, tobramycin, neomycin and apramycin. This Serratia marcescens protein is Aminoglycoside N(3)-acetyltransferase III (aac3-Vb).